Reading from the N-terminus, the 231-residue chain is 7-cyano-7-deazaguanine synthase (231 aa).

8–18 (FSGGQDSTTCL) lines the ATP pocket. Positions 188, 197, 200, and 203 each coordinate Zn(2+).

Belongs to the QueC family. Zn(2+) is required as a cofactor.

The enzyme catalyses 7-carboxy-7-deazaguanine + NH4(+) + ATP = 7-cyano-7-deazaguanine + ADP + phosphate + H2O + H(+). The protein operates within purine metabolism; 7-cyano-7-deazaguanine biosynthesis. Catalyzes the ATP-dependent conversion of 7-carboxy-7-deazaguanine (CDG) to 7-cyano-7-deazaguanine (preQ(0)). This is 7-cyano-7-deazaguanine synthase from Pectobacterium carotovorum subsp. carotovorum (strain PC1).